The following is a 354-amino-acid chain: Protein Wnt-11 (354 aa).

A signal peptide spans 1 to 24 (MKPSPQFLLAAFLSLILQTGICYG). N-linked (GlcNAc...) asparagine glycosylation is found at N40 and N90. 11 disulfide bridges follow: C80-C91, C130-C138, C140-C157, C209-C223, C211-C218, C283-C314, C299-C309, C313-C353, C329-C344, C331-C341, and C336-C337. A lipid anchor (O-palmitoleoyl serine; by PORCN) is attached at S215. Residues N300 and N304 are each glycosylated (N-linked (GlcNAc...) asparagine).

It belongs to the Wnt family. Post-translationally, palmitoleoylation is required for efficient binding to frizzled receptors. Depalmitoleoylation leads to Wnt signaling pathway inhibition.

The protein resides in the secreted. It is found in the extracellular space. It localises to the extracellular matrix. In terms of biological role, ligand for members of the frizzled family of seven transmembrane receptors. May play a role in the formation of dermal structure, both limb and feather buds. Is likely to signal over only few cell diameters. This Coturnix japonica (Japanese quail) protein is Protein Wnt-11 (WNT11).